The following is a 490-amino-acid chain: Protein U94 (490 aa).

The 210-residue stretch at 1–210 (MFSIINPSDD…SHFNKKPNVK (210 aa)) folds into the PV NS1-Nuc domain.

The protein resides in the host nucleus. The protein is Protein U94 (U94) of Human herpesvirus 6A (strain Uganda-1102) (HHV-6 variant A).